A 632-amino-acid polypeptide reads, in one-letter code: Extracellular metalloproteinase 1 (632 aa).

An N-terminal signal peptide occupies residues 1-19 (MHGLLLAAGLLSLPLRVLA). The propeptide occupies 20–243 (HPQPSTSLTS…VHNVVDYVSH (224 aa)). Asparagine 284 carries N-linked (GlcNAc...) asparagine glycosylation. Histidine 427 serves as a coordination point for Zn(2+). Residue glutamate 428 is part of the active site. Histidine 431 is a Zn(2+) binding site. Asparagine 591 and asparagine 620 each carry an N-linked (GlcNAc...) asparagine glycan.

The protein belongs to the peptidase M36 family. Requires Zn(2+) as cofactor.

The protein resides in the secreted. Secreted metalloproteinase that allows assimilation of proteinaceous substrates and probably acts as a virulence factor. This is Extracellular metalloproteinase 1 (MEP1) from Arthroderma gypseum (strain ATCC MYA-4604 / CBS 118893) (Microsporum gypseum).